A 188-amino-acid polypeptide reads, in one-letter code: MNITATVLLAFGMSMDAFAASIGKGATLHKPKFSEALRTGLIFGAVETLTPLIGWGLGMLASKFVLEWNHWVAFILLVFLGIRMIIEGVRGGNDEDDEPLRRHSFWLLVTTAIATSLDAMAVGVGLAFLQVNIIATALAIGCATLIMSTLGIMVGRFIGPLLGKRAEILGGAVLIGIGAQILWTHFHG.

The next 6 membrane-spanning stretches (helical) occupy residues 3–23, 41–61, 66–86, 107–129, 143–163, and 168–188; these read ITAT…ASIG, LIFG…GMLA, LEWN…RMII, LLVT…LAFL, ATLI…PLLG, and ILGG…HFHG.

It belongs to the MntP (TC 9.B.29) family.

It localises to the cell inner membrane. Its function is as follows. Probably functions as a manganese efflux pump. The polypeptide is Putative manganese efflux pump MntP (Citrobacter koseri (strain ATCC BAA-895 / CDC 4225-83 / SGSC4696)).